The primary structure comprises 563 residues: Arginine--tRNA ligase (563 aa).

Positions 121–131 (PNIAKPFSIGH) match the 'HIGH' region motif.

This sequence belongs to the class-I aminoacyl-tRNA synthetase family. In terms of assembly, monomer.

The protein localises to the cytoplasm. The catalysed reaction is tRNA(Arg) + L-arginine + ATP = L-arginyl-tRNA(Arg) + AMP + diphosphate. This chain is Arginine--tRNA ligase, found in Streptococcus pyogenes serotype M49 (strain NZ131).